The primary structure comprises 456 residues: Glycerol-3-phosphate acyltransferase 4 (456 aa).

Positions 1 to 37 (MFLLLPFDSLIVNLLGISLTVLFTLLLVFIIVPAIFG) are cleaved as a signal peptide. 2 helical membrane-spanning segments follow: residues 156 to 176 (ISLRLTVLWGLGVLIRYCFLL) and 180 to 200 (IALAFTGISLLVVGTTVVGYL). The N-linked (GlcNAc...) asparagine glycan is linked to Asn247. An HXXXXD motif motif is present at residues 248–253 (HTSPID). N-linked (GlcNAc...) asparagine glycosylation is found at Asn327, Asn328, and Asn362.

The protein belongs to the 1-acyl-sn-glycerol-3-phosphate acyltransferase family. In terms of tissue distribution, ubiquitous. High levels in testis. Relatively high level of expression in skeletal muscle and heart. Relatively low level of expression in lung.

Its subcellular location is the endoplasmic reticulum membrane. The enzyme catalyses sn-glycerol 3-phosphate + an acyl-CoA = a 1-acyl-sn-glycero-3-phosphate + CoA. The catalysed reaction is dodecanoyl-CoA + sn-glycerol 3-phosphate = 1-dodecanoyl-sn-glycerol 3-phosphate + CoA. It catalyses the reaction sn-glycerol 3-phosphate + hexadecanoyl-CoA = 1-hexadecanoyl-sn-glycero-3-phosphate + CoA. It carries out the reaction sn-glycerol 3-phosphate + octadecanoyl-CoA = 1-octadecanoyl-sn-glycero-3-phosphate + CoA. The enzyme catalyses sn-glycerol 3-phosphate + (9Z)-octadecenoyl-CoA = 1-(9Z-octadecenoyl)-sn-glycero-3-phosphate + CoA. The catalysed reaction is (9Z,12Z)-octadecadienoyl-CoA + sn-glycerol 3-phosphate = 1-(9Z,12Z)-octadecadienoyl-sn-glycero-3-phosphate + CoA. It participates in phospholipid metabolism; CDP-diacylglycerol biosynthesis; CDP-diacylglycerol from sn-glycerol 3-phosphate: step 1/3. Its activity is regulated as follows. Inhibited by N-ethylmaleimide (NEM). In terms of biological role, converts glycerol-3-phosphate to 1-acyl-sn-glycerol-3-phosphate (lysophosphatidic acid or LPA) by incorporating an acyl moiety at the sn-1 position of the glycerol backbone. Active against both saturated and unsaturated long-chain fatty acyl-CoAs. Protects cells against lipotoxicity. The polypeptide is Glycerol-3-phosphate acyltransferase 4 (Homo sapiens (Human)).